A 513-amino-acid polypeptide reads, in one-letter code: uncharacterized protein (513 aa).

A disordered region spans residues 1-48 (MGSSEEQSVPGDDFYEESGDLNTGLSLVLRPAKSNEGESSLSSPKGSK). Residues 37–48 (GESSLSSPKGSK) are compositionally biased toward polar residues. Ser-43, Ser-84, and Ser-123 each carry phosphoserine. 4 disordered regions span residues 210-229 (DGNH…GDLA), 236-287 (TRDS…GSKS), 390-414 (AKED…AEPP), and 453-481 (SVLS…TQGC).

This is an uncharacterized protein from Mus musculus (Mouse).